The sequence spans 443 residues: Ribosomal protein uS12 methylthiotransferase RimO (443 aa).

The MTTase N-terminal domain occupies 10 to 120 (PRVGFVSLGC…VMQAVHRHLP (111 aa)). The [4Fe-4S] cluster site is built by Cys19, Cys55, Cys84, Cys151, Cys155, and Cys158. The Radical SAM core domain maps to 137–375 (LTPQHYAYLK…DFQEDISTQR (239 aa)). Residues 377–443 (EAKIGREMTV…IHDLYAERVV (67 aa)) enclose the TRAM domain.

The protein belongs to the methylthiotransferase family. RimO subfamily. The cofactor is [4Fe-4S] cluster.

It localises to the cytoplasm. It catalyses the reaction L-aspartate(89)-[ribosomal protein uS12]-hydrogen + (sulfur carrier)-SH + AH2 + 2 S-adenosyl-L-methionine = 3-methylsulfanyl-L-aspartate(89)-[ribosomal protein uS12]-hydrogen + (sulfur carrier)-H + 5'-deoxyadenosine + L-methionine + A + S-adenosyl-L-homocysteine + 2 H(+). Catalyzes the methylthiolation of an aspartic acid residue of ribosomal protein uS12. This chain is Ribosomal protein uS12 methylthiotransferase RimO, found in Azoarcus sp. (strain BH72).